The sequence spans 780 residues: LPS-assembly protein LptD (780 aa).

The N-terminal stretch at 1–24 (MKKRFPTLLATLIWTALYSQHTLA) is a signal peptide.

The protein belongs to the LptD family. In terms of assembly, component of the lipopolysaccharide transport and assembly complex. Interacts with LptE and LptA.

The protein resides in the cell outer membrane. Its function is as follows. Together with LptE, is involved in the assembly of lipopolysaccharide (LPS) at the surface of the outer membrane. The chain is LPS-assembly protein LptD from Yersinia pestis bv. Antiqua (strain Antiqua).